The primary structure comprises 1196 residues: Chromosome partition protein Smc (1196 aa).

Position 32–39 (32–39 (PNGSGKSN)) interacts with ATP. 2 coiled-coil regions span residues 168–288 (LKHR…SVQQ) and 327–497 (DALE…LERK). The 112-residue stretch at 510–621 (AGILGPMAKL…VDDLDRALAL (112 aa)) folds into the SMC hinge domain. Coiled coils occupy residues 654-829 (LEVT…RAQQ) and 972-1026 (DRPT…KDLL).

Belongs to the SMC family. As to quaternary structure, homodimer.

The protein localises to the cytoplasm. In terms of biological role, required for chromosome condensation and partitioning. The protein is Chromosome partition protein Smc of Mycolicibacterium paratuberculosis (strain ATCC BAA-968 / K-10) (Mycobacterium paratuberculosis).